The chain runs to 406 residues: NADH-quinone oxidoreductase subunit D (406 aa).

This sequence belongs to the complex I 49 kDa subunit family. In terms of assembly, NDH-1 is composed of 14 different subunits. Subunits NuoB, C, D, E, F, and G constitute the peripheral sector of the complex.

The protein localises to the cell inner membrane. The enzyme catalyses a quinone + NADH + 5 H(+)(in) = a quinol + NAD(+) + 4 H(+)(out). NDH-1 shuttles electrons from NADH, via FMN and iron-sulfur (Fe-S) centers, to quinones in the respiratory chain. The immediate electron acceptor for the enzyme in this species is believed to be ubiquinone. Couples the redox reaction to proton translocation (for every two electrons transferred, four hydrogen ions are translocated across the cytoplasmic membrane), and thus conserves the redox energy in a proton gradient. The polypeptide is NADH-quinone oxidoreductase subunit D (Rhizorhabdus wittichii (strain DSM 6014 / CCUG 31198 / JCM 15750 / NBRC 105917 / EY 4224 / RW1) (Sphingomonas wittichii)).